The chain runs to 344 residues: [LysW]-L-2-aminoadipate 6-phosphate reductase (344 aa).

NADP(+) is bound by residues 12–15 (SGYA), 36–38 (SRR), and Leu75. Residue Cys148 is part of the active site. NADP(+)-binding residues include Ser180, Ala184, and Asn312.

It belongs to the NAGSA dehydrogenase family. Type 1 subfamily. LysY sub-subfamily. Homotetramer. Interacts with LysW. May form a ternary complex with LysW and LysZ.

Its subcellular location is the cytoplasm. It carries out the reaction [amino-group carrier protein]-C-terminal-N-(1-carboxy-5-oxopentan-1-yl)-L-glutamine + phosphate + NADP(+) = [amino-group carrier protein]-C-terminal-N-(1-carboxy-5-phosphooxy-5-oxopentan-1-yl)-L-glutamine + NADPH + H(+). It participates in amino-acid biosynthesis; L-lysine biosynthesis via AAA pathway; L-lysine from L-alpha-aminoadipate (Thermus route): step 3/5. Catalyzes the NADPH-dependent reduction of [LysW]-aminoadipate 6-phosphate to yield [LysW]-aminoadipate 6-semialdehyde. The sequence is that of [LysW]-L-2-aminoadipate 6-phosphate reductase from Thermus thermophilus (strain ATCC BAA-163 / DSM 7039 / HB27).